The following is a 430-amino-acid chain: Histidine--tRNA ligase (430 aa).

Belongs to the class-II aminoacyl-tRNA synthetase family. Homodimer.

It is found in the cytoplasm. It catalyses the reaction tRNA(His) + L-histidine + ATP = L-histidyl-tRNA(His) + AMP + diphosphate + H(+). This chain is Histidine--tRNA ligase, found in Acinetobacter baylyi (strain ATCC 33305 / BD413 / ADP1).